A 990-amino-acid polypeptide reads, in one-letter code: Importin beta-like protein kap111 (990 aa).

Belongs to the importin beta family.

The protein resides in the nucleus. In terms of biological role, functions as a component of the nuclear pore complex (NPC). NPC components, collectively referred to as nucleoporins (NUPs), can play the role of both NPC structural components and of docking or interaction partners for transiently associated nuclear transport factors. Active directional transport is assured by both, a Phe-Gly (FG) repeat affinity gradient for these transport factors across the NPC and a transport cofactor concentration gradient across the nuclear envelope. The chain is Importin beta-like protein kap111 (kap111) from Schizosaccharomyces pombe (strain 972 / ATCC 24843) (Fission yeast).